Here is a 189-residue protein sequence, read N- to C-terminus: Parkinson disease protein 7 homolog (189 aa).

Position 2 is an N-acetylalanine (Ala2). Residues Cys46 and Cys53 are each lipidated (S-palmitoyl cysteine). Tyr67 is modified (phosphotyrosine). Cys106 functions as the Nucleophile in the catalytic mechanism. Cys106 bears the Cysteine sulfinic acid (-SO2H); alternate mark. Cys106 carries the S-palmitoyl cysteine; alternate lipid modification. His126 is a catalytic residue. Lys130 is covalently cross-linked (Glycyl lysine isopeptide (Lys-Gly) (interchain with G-Cter in SUMO)). Lys148 carries the N6-acetyllysine modification. Residue Lys182 is modified to N6-succinyllysine.

Belongs to the peptidase C56 family. Homodimer. Binds EFCAB6/DJBP and PIAS2. Part of a ternary complex containing PARK7, EFCAB6/DJBP and AR. Interacts (via N-terminus) with OTUD7B. Interacts with BBS1, HIPK1, CLCF1 and MTERF. Forms a complex with PINK1 and PRKN. Interacts (via C-terminus) with NCF1; the interaction is enhanced by LPS and modulates NCF1 phosphorylation and membrane translocation. Interacts with NENF. Deglycase activity does not require glutathione as a cofactor, however, glycated glutathione constitutes a PARK7 substrate. is required as a cofactor. In terms of processing, sumoylated on Lys-130 by PIAS2 or PIAS4; which is essential for cell-growth promoting activity and transforming activity. Undergoes cleavage of a C-terminal peptide and subsequent activation of protease activity in response to oxidative stress. In terms of tissue distribution, ubiquitous. Detected on epididymal sperm. Highly expressed in testis and prostate. Detected at lower levels in heart, lung, brain, liver, kidney, seminal vesicle, caput and corpus epididymis.

It localises to the cell membrane. It is found in the cytoplasm. Its subcellular location is the membrane raft. The protein resides in the nucleus. The protein localises to the mitochondrion. It localises to the endoplasmic reticulum. It carries out the reaction N(omega)-(1-hydroxy-2-oxopropyl)-L-arginyl-[protein] + H2O = lactate + L-arginyl-[protein] + H(+). It catalyses the reaction N(6)-(1-hydroxy-2-oxopropyl)-L-lysyl-[protein] + H2O = lactate + L-lysyl-[protein] + H(+). The enzyme catalyses S-(1-hydroxy-2-oxopropyl)-L-cysteinyl-[protein] + H2O = lactate + L-cysteinyl-[protein] + H(+). The catalysed reaction is N(omega)-(1-hydroxy-2-oxoethyl)-L-arginyl-[protein] + H2O = L-arginyl-[protein] + glycolate + H(+). It carries out the reaction N(6)-(1-hydroxy-2-oxoethyl)-L-lysyl-[protein] + H2O = glycolate + L-lysyl-[protein] + H(+). It catalyses the reaction S-(1-hydroxy-2-oxoethyl)-L-cysteinyl-[protein] + H2O = glycolate + L-cysteinyl-[protein] + H(+). The enzyme catalyses N(2)-(1-hydroxy-2-oxopropyl)-dGTP + H2O = lactate + dGTP + H(+). The catalysed reaction is N(2)-(1-hydroxy-2-oxopropyl)-GTP + H2O = lactate + GTP + H(+). It carries out the reaction N(2)-(1-hydroxy-2-oxopropyl)-GDP + H2O = lactate + GDP + H(+). It catalyses the reaction N(2)-(1-hydroxy-2-oxopropyl)-GMP + H2O = lactate + GMP + H(+). The enzyme catalyses N(2)-(1-hydroxy-2-oxoethyl)-dGTP + H2O = dGTP + glycolate + H(+). The catalysed reaction is N(2)-(1-hydroxy-2-oxoethyl)-GTP + H2O = glycolate + GTP + H(+). It carries out the reaction N(2)-(1-hydroxy-2-oxoethyl)-GDP + H2O = glycolate + GDP + H(+). It catalyses the reaction N(2)-(1-hydroxy-2-oxoethyl)-GMP + H2O = glycolate + GMP + H(+). The enzyme catalyses an N(2)-(1-hydroxy-2-oxopropyl)-guanosine in RNA + H2O = a guanosine in RNA + lactate + H(+). The catalysed reaction is an N(2)-(1-hydroxy-2-oxopropyl)-2'-deoxyguanosine in DNA + H2O = a 2'-deoxyguanosine in DNA + lactate + H(+). It carries out the reaction an N(2)-(1-hydroxy-2-oxoethyl)-guanosine in RNA + H2O = a guanosine in RNA + glycolate + H(+). It catalyses the reaction an N(2)-(1-hydroxy-2-oxoethyl)-2'-deoxyguanosine in DNA + H2O = a 2'-deoxyguanosine in DNA + glycolate + H(+). Protein and nucleotide deglycase that catalyzes the deglycation of the Maillard adducts formed between amino groups of proteins or nucleotides and reactive carbonyl groups of glyoxals. Thus, functions as a protein deglycase that repairs methylglyoxal- and glyoxal-glycated proteins, and releases repaired proteins and lactate or glycolate, respectively. Deglycates cysteine, arginine and lysine residues in proteins, and thus reactivates these proteins by reversing glycation by glyoxals. Acts on early glycation intermediates (hemithioacetals and aminocarbinols), preventing the formation of advanced glycation endproducts (AGE) that cause irreversible damage. Also functions as a nucleotide deglycase able to repair glycated guanine in the free nucleotide pool (GTP, GDP, GMP, dGTP) and in DNA and RNA. Is thus involved in a major nucleotide repair system named guanine glycation repair (GG repair), dedicated to reversing methylglyoxal and glyoxal damage via nucleotide sanitization and direct nucleic acid repair. Also displays an apparent glyoxalase activity that in fact reflects its deglycase activity. Plays an important role in cell protection against oxidative stress and cell death acting as oxidative stress sensor and redox-sensitive chaperone and protease; functions probably related to its primary function. It is involved in neuroprotective mechanisms like the stabilization of NFE2L2 and PINK1 proteins, male fertility as a positive regulator of androgen signaling pathway as well as cell growth and transformation through, for instance, the modulation of NF-kappa-B signaling pathway. Eliminates hydrogen peroxide and protects cells against hydrogen peroxide-induced cell death. Required for correct mitochondrial morphology and function as well as for autophagy of dysfunctional mitochondria. Plays a role in regulating expression or stability of the mitochondrial uncoupling proteins SLC25A14 and SLC25A27 in dopaminergic neurons of the substantia nigra pars compacta and attenuates the oxidative stress induced by calcium entry into the neurons via L-type channels during pacemaking. Regulates astrocyte inflammatory responses, may modulate lipid rafts-dependent endocytosis in astrocytes and neuronal cells. In pancreatic islets, involved in the maintenance of mitochondrial reactive oxygen species (ROS) levels and glucose homeostasis in an age- and diet dependent manner. Protects pancreatic beta cells from cell death induced by inflammatory and cytotoxic setting. Binds to a number of mRNAs containing multiple copies of GG or CC motifs and partially inhibits their translation but dissociates following oxidative stress. Metal-binding protein able to bind copper as well as toxic mercury ions, enhances the cell protection mechanism against induced metal toxicity. In macrophages, interacts with the NADPH oxidase subunit NCF1 to direct NADPH oxidase-dependent ROS production, and protects against sepsis. The polypeptide is Parkinson disease protein 7 homolog (Rattus norvegicus (Rat)).